The following is a 109-amino-acid chain: Small ribosomal subunit protein bS6 (109 aa).

Belongs to the bacterial ribosomal protein bS6 family.

Its function is as follows. Binds together with bS18 to 16S ribosomal RNA. The protein is Small ribosomal subunit protein bS6 of Ehrlichia canis (strain Jake).